A 420-amino-acid chain; its full sequence is Glucose-1-phosphate adenylyltransferase (420 aa).

Alpha-D-glucose 1-phosphate contacts are provided by residues Tyr107, Gly172, Glu187–Lys188, and Ser205.

It belongs to the bacterial/plant glucose-1-phosphate adenylyltransferase family. In terms of assembly, homotetramer.

It catalyses the reaction alpha-D-glucose 1-phosphate + ATP + H(+) = ADP-alpha-D-glucose + diphosphate. It participates in glycan biosynthesis; glycogen biosynthesis. Involved in the biosynthesis of ADP-glucose, a building block required for the elongation reactions to produce glycogen. Catalyzes the reaction between ATP and alpha-D-glucose 1-phosphate (G1P) to produce pyrophosphate and ADP-Glc. This Sinorhizobium fredii (strain NBRC 101917 / NGR234) protein is Glucose-1-phosphate adenylyltransferase.